The chain runs to 441 residues: FAM10 family protein At4g22670 (441 aa).

Residues 41-114 (KIPTGVHEED…PQKMGDSSVE (74 aa)) are disordered. The span at 46–55 (VHEEDKDTKP) shows a compositional bias: basic and acidic residues. Composition is skewed to acidic residues over residues 61–71 (EESDDDMDETE) and 78–102 (EEEE…EPDN). Phosphoserine occurs at positions 63 and 89. 3 TPR repeats span residues 121–156 (EAAQ…NPTS), 158–190 (IMYG…NPDS), and 191–224 (AKGY…DYDE). Residues 236-285 (NAHKLEEHRRKYDRLRKEREDKKAERDRLRRRAEAQAAYDKAKKEEQSSS) are a coiled coil. Positions 244–282 (RRKYDRLRKEREDKKAERDRLRRRAEAQAAYDKAKKEEQ) are enriched in basic and acidic residues. Residues 244–314 (RRKYDRLRKE…MPGGFPGGMG (71 aa)) are disordered. Gly residues predominate over residues 289 to 314 (SGGGFPGGMPGGFPGGMPGGFPGGMG). One can recognise an STI1 domain in the interval 391 to 430 (DPELMTAFSDPEVMAALQDVMKNPANLAKHQANPKVAPVI).

The protein belongs to the FAM10 family.

The polypeptide is FAM10 family protein At4g22670 (Arabidopsis thaliana (Mouse-ear cress)).